The sequence spans 298 residues: NAD kinase (298 aa).

Asp-80 functions as the Proton acceptor in the catalytic mechanism. Residues 80–81 (DG), 154–155 (ND), Arg-182, Asp-184, 195–200 (TAYALS), Ala-219, and Gln-253 each bind NAD(+).

This sequence belongs to the NAD kinase family. It depends on a divalent metal cation as a cofactor.

The protein localises to the cytoplasm. The catalysed reaction is NAD(+) + ATP = ADP + NADP(+) + H(+). Functionally, involved in the regulation of the intracellular balance of NAD and NADP, and is a key enzyme in the biosynthesis of NADP. Catalyzes specifically the phosphorylation on 2'-hydroxyl of the adenosine moiety of NAD to yield NADP. This chain is NAD kinase, found in Delftia acidovorans (strain DSM 14801 / SPH-1).